Reading from the N-terminus, the 124-residue chain is KESAAAKFERQHMDSSTSSASSSNYCNQMMKSRNLTQDRCKPVNTFVHEPLADVQAVCSQKNVACKNGQTNCYQSYSTMSITDCRETGSSKYPNCAYKATQAKKHIIVACEGNPYVPVHFDASV.

Basic and acidic residues predominate over residues 1–13; the sequence is KESAAAKFERQHM. The interval 1–24 is disordered; it reads KESAAAKFERQHMDSSTSSASSSN. Residues K7 and R10 each coordinate substrate. H12 functions as the Proton acceptor in the catalytic mechanism. 4 disulfide bridges follow: C26-C84, C40-C95, C58-C110, and C65-C72. Substrate is bound by residues 41 to 45, K66, and R85; that span reads KPVNT. H119 functions as the Proton donor in the catalytic mechanism.

It belongs to the pancreatic ribonuclease family. In terms of assembly, monomer. Interacts with and forms tight 1:1 complexes with RNH1. Dimerization of two such complexes may occur. Interaction with RNH1 inhibits this protein. Pancreas.

The protein localises to the secreted. It carries out the reaction an [RNA] containing cytidine + H2O = an [RNA]-3'-cytidine-3'-phosphate + a 5'-hydroxy-ribonucleotide-3'-[RNA].. It catalyses the reaction an [RNA] containing uridine + H2O = an [RNA]-3'-uridine-3'-phosphate + a 5'-hydroxy-ribonucleotide-3'-[RNA].. In terms of biological role, endonuclease that catalyzes the cleavage of RNA on the 3' side of pyrimidine nucleotides. Acts on single-stranded and double-stranded RNA. The sequence is that of Ribonuclease pancreatic (RNASE1) from Connochaetes taurinus (Blue wildebeest).